A 567-amino-acid polypeptide reads, in one-letter code: Beta-galactoside-specific lectin 2 (567 aa).

The first 33 residues, 1–33 (MNARLASSRAWVWCFLMVGLVCGATAKAESKIN), serve as a signal peptide directing secretion. Asn145 carries an N-linked (GlcNAc...) asparagine glycan. Glu198 is a catalytic residue. Cystine bridges form between Cys280–Cys306 and Cys322–Cys341. A propeptide spans 288-301 (DVHNWPLVIRPVMV) (connecting peptide). Positions 309–439 (SEPTVRIVGR…DSLGQSWLAS (131 aa)) constitute a Ricin B-type lectin 1 domain. 324–326 (DVR) serves as a coordination point for D-galactose. N-linked (GlcNAc...) asparagine glycosylation occurs at Asn362. A disulfide bridge links Cys365 with Cys382. Residue Asn440 is glycosylated (N-linked (GlcNAc...) asparagine). In terms of domain architecture, Ricin B-type lectin 2 spans 443–566 (APREVTIYGF…GNPNQMWLPV (124 aa)). Intrachain disulfides connect Cys456/Cys469 and Cys495/Cys512. 539–541 (DVR) contacts D-galactose.

The protein belongs to the ribosome-inactivating protein family. Type 2 RIP subfamily. In terms of assembly, disulfide-linked dimer of A and B chains.

It carries out the reaction Endohydrolysis of the N-glycosidic bond at one specific adenosine on the 28S rRNA.. The A chain is responsible for inhibiting protein synthesis through the catalytic inactivation of 60S ribosomal subunits by removing adenine from position 4,324 of 28S rRNA. The B chain binds to cell receptors and probably facilitates the entry into the cell of the A chain; B chains are also responsible for cell agglutination (lectin activity). This is Beta-galactoside-specific lectin 2 from Viscum album (European mistletoe).